The sequence spans 181 residues: ABC transporter E family member 3 (181 aa).

One can recognise an ABC transporter domain in the interval 20-176 (SQIIVMLGEN…KAAFARFHNG (157 aa)). 27–34 (GENGTGKT) contributes to the ATP binding site.

This sequence belongs to the ABC transporter superfamily. ABCE family. In terms of tissue distribution, mostly expressed in roots and leaves, and, to a lower extent, in stems, flowers and siliques.

The chain is ABC transporter E family member 3 (ABCE3) from Arabidopsis thaliana (Mouse-ear cress).